Reading from the N-terminus, the 348-residue chain is Protein RecA (348 aa).

67–74 provides a ligand contact to ATP; that stretch reads GPESSGKT.

The protein belongs to the RecA family.

It localises to the cytoplasm. In terms of biological role, can catalyze the hydrolysis of ATP in the presence of single-stranded DNA, the ATP-dependent uptake of single-stranded DNA by duplex DNA, and the ATP-dependent hybridization of homologous single-stranded DNAs. It interacts with LexA causing its activation and leading to its autocatalytic cleavage. This is Protein RecA from Salinispora arenicola (strain CNS-205).